Reading from the N-terminus, the 166-residue chain is uncharacterized protein (166 aa).

Residues 3–65 (LTEKETEILE…IDWRKVDGHE (63 aa)) form the HTH asnC-type domain. Residues 22 to 41 (LETIAKMAGIPVNEVKTIID) constitute a DNA-binding region (H-T-H motif).

This is an uncharacterized protein from Bacillus subtilis (strain 168).